We begin with the raw amino-acid sequence, 201 residues long: Oligoribonuclease (201 aa).

One can recognise an Exonuclease domain in the interval 20–183; sequence LVWLDMEMTG…ADIHESIDEL (164 aa). The active site involves Y141.

It belongs to the oligoribonuclease family.

It localises to the cytoplasm. 3'-to-5' exoribonuclease specific for small oligoribonucleotides. In Burkholderia pseudomallei (strain 1106a), this protein is Oligoribonuclease.